A 440-amino-acid chain; its full sequence is Protein disulfide-isomerase 5-2 (440 aa).

The signal sequence occupies residues 1 to 23; the sequence is MRSLKLLLCWISFLTLSISISAS. Positions 24–139 constitute a Thioredoxin domain; sequence SDDQFTLDGT…LVRYLKKFVA (116 aa). Residues Cys61 and Cys64 each act as nucleophile in the active site. A disulfide bridge connects residues Cys61 and Cys64. Phosphothreonine is present on Thr160. Asn171 carries N-linked (GlcNAc...) asparagine glycosylation. A helical membrane pass occupies residues 376–396; that stretch reads SMIGIRSVYILVFLVAVIMML. The disordered stretch occupies residues 406-440; it reads TGVRTATAVRERVDQATTVPEDESSEHKPSDKKED. Residues 430 to 440 show a composition bias toward basic and acidic residues; the sequence is SEHKPSDKKED.

Belongs to the protein disulfide isomerase family. Widely expressed.

It localises to the membrane. Acts as a protein-folding catalyst that interacts with nascent polypeptides to catalyze the formation, isomerization, and reduction or oxidation of disulfide bonds. This Arabidopsis thaliana (Mouse-ear cress) protein is Protein disulfide-isomerase 5-2 (PDIL5-2).